Reading from the N-terminus, the 394-residue chain is RNA binding protein fox-1 homolog 2 (394 aa).

Disordered regions lie at residues 1–70 and 83–135; these read MGRL…DYAG and TQAH…HVSN. 2 stretches are compositionally biased toward polar residues: residues 24 to 36 and 83 to 103; these read RDSQ…TTTP and TQAH…SLTT. The segment covering 105–125 has biased composition (low complexity); sequence GGAQTDGQQSQTQSSENSESK. An RRM domain is found at 129 to 205; it reads KRLHVSNIPF…RKIEVNNATA (77 aa). Arg-285 is subject to Omega-N-methylarginine. Asymmetric dimethylarginine occurs at positions 301 and 333. Asymmetric dimethylarginine; alternate occurs at positions 385 and 390. An omega-N-methylarginine; alternate mark is found at Arg-385 and Arg-390.

In terms of assembly, interacts with ER-alpha N-terminal activation domain. Interacts with RBPMS; the interaction allows cooperative assembly of stable cell-specific alternative splicing regulatory complexes.

The protein localises to the nucleus. The protein resides in the cytoplasm. Its function is as follows. RNA-binding protein that regulates alternative splicing events by binding to 5'-UGCAUGU-3' elements. Prevents binding of U2AF2 to the 3'-splice site. Regulates alternative splicing of tissue-specific exons and of differentially spliced exons during erythropoiesis. Seems to act as a coregulatory factor of ER-alpha. Together with RNA binding proteins RBPMS and MBNL1/2, activates vascular smooth muscle cells alternative splicing events. The polypeptide is RNA binding protein fox-1 homolog 2 (RBFOX2) (Bos taurus (Bovine)).